Consider the following 417-residue polypeptide: MSQRKRYSLNVVTSPSIPSPTPSAPIRTNESNWEAASPASAASSFLPNVHHGGTVLNPGLGIMRSPSLNKSGAFGRSGSSGSSTVIEPSNIKLLLIGDANVGKTAMILSYCRELLTRAEMSRSARLRHQQQQQHKDLGLKKTVVNHRLSMKEKRKRYSSNDFEKEFKDINHFADETSDFGNPNIGDDNNHEMADPNEIVIETRSTIGIDIKTNLVNIDNRFFNVILWDTAGQERYQNAIIPSLYKKTNAVILTYDITNAKSFQSCMERWIVQALENFSSQDLLKARFFLVGNKIDLYKERQVTHYDVVQMVQEMQLKHGIKISGNFEVSCKWVNVVERTMNMIILDLVENGCFENNDPCVSITTSDDVQGHEQEFHDTVEEPFNFTRQRQHQLEKNNTVDITKPNDDIANNQSICCV.

Residues 1–34 (MSQRKRYSLNVVTSPSIPSPTPSAPIRTNESNWE) form a disordered region. GTP is bound by residues 97 to 104 (GDANVGKT), 228 to 232 (DTAGQ), and 292 to 295 (NKID). 2 S-geranylgeranyl cysteine lipidation sites follow: Cys-415 and Cys-416.

The protein belongs to the small GTPase superfamily. Rab family. In terms of assembly, interacts with MYO2 (via C-terminal tail domain). Interacts with YIF1, YIP3, YIP4 and YIP5.

The protein localises to the endoplasmic reticulum membrane. The protein resides in the bud tip. It is found in the bud neck. Functionally, involved in the positive control of both endoplasmic reticulum (ER) and mitochondrion inheritance during cell divison. Required for the MYO2-dependent retention of newly inherited mitochondria at the bud tip in developing daughter cells. In Saccharomyces cerevisiae (strain AWRI1631) (Baker's yeast), this protein is GTP-binding protein YPT11 (YPT11).